The primary structure comprises 247 residues: 3-deoxy-manno-octulosonate cytidylyltransferase (247 aa).

Belongs to the KdsB family.

It localises to the cytoplasm. It catalyses the reaction 3-deoxy-alpha-D-manno-oct-2-ulosonate + CTP = CMP-3-deoxy-beta-D-manno-octulosonate + diphosphate. Its pathway is nucleotide-sugar biosynthesis; CMP-3-deoxy-D-manno-octulosonate biosynthesis; CMP-3-deoxy-D-manno-octulosonate from 3-deoxy-D-manno-octulosonate and CTP: step 1/1. The protein operates within bacterial outer membrane biogenesis; lipopolysaccharide biosynthesis. Functionally, activates KDO (a required 8-carbon sugar) for incorporation into bacterial lipopolysaccharide in Gram-negative bacteria. The chain is 3-deoxy-manno-octulosonate cytidylyltransferase from Methylorubrum extorquens (strain PA1) (Methylobacterium extorquens).